Here is a 197-residue protein sequence, read N- to C-terminus: Caspase recruitment domain-containing protein 16 (197 aa).

The region spanning 1-91 (MADKVLKEKR…YLAETLGLSA (91 aa)) is the CARD domain.

As to quaternary structure, homooligomer. Interacts with CASP1, CASP4, CARD8 and RIPK2. Widely expressed. Expressed at higher level in placenta, spleen, lymph node and bone marrow. Weakly or not expressed in thymus.

Caspase inhibitor. Acts as a regulator of procaspase-1/CASP1 activation implicated in the regulation of the proteolytic maturation of pro-interleukin-1 beta (IL1B) and its release during inflammation. Inhibits the release of IL1B in response to LPS in monocytes. Also induces NF-kappa-B activation during the pro-inflammatory cytokine response. Also able to inhibit CASP1-mediated neuronal cell death, TNF-alpha, hypoxia-, UV-, and staurosporine-mediated cell death but not ER stress-mediated cell death. Acts by preventing activation of caspases CASP1 and CASP4, possibly by preventing the interaction between CASP1 and RIPK2. This is Caspase recruitment domain-containing protein 16 (CARD16) from Homo sapiens (Human).